The sequence spans 180 residues: Putative manganese efflux pump MntP (180 aa).

6 consecutive transmembrane segments (helical) span residues 4–24, 40–60, 64–84, 103–123, 129–149, and 156–176; these read FVTI…VALG, LTIG…GKWL, FDVI…VQMA, LLLF…SFGI, FVTV…GLIV, and FLGA…GLKI.

The protein belongs to the MntP (TC 9.B.29) family.

It is found in the cell membrane. Its function is as follows. Probably functions as a manganese efflux pump. The protein is Putative manganese efflux pump MntP of Shouchella clausii (strain KSM-K16) (Alkalihalobacillus clausii).